We begin with the raw amino-acid sequence, 316 residues long: Protease HtpX homolog (316 aa).

A helical transmembrane segment spans residues L16 to F36. H134 lines the Zn(2+) pocket. The active site involves E135. A Zn(2+)-binding site is contributed by H138. Transmembrane regions (helical) follow at residues V149–G169 and L180–V200. E209 is a binding site for Zn(2+). The segment at P295–S316 is disordered.

It belongs to the peptidase M48B family. Zn(2+) is required as a cofactor.

The protein localises to the cell inner membrane. This chain is Protease HtpX homolog, found in Caulobacter vibrioides (strain ATCC 19089 / CIP 103742 / CB 15) (Caulobacter crescentus).